The primary structure comprises 504 residues: L-carnitine/gamma-butyrobetaine antiporter (504 aa).

The next 12 membrane-spanning stretches (helical) occupy residues 10 to 30, 51 to 71, 92 to 112, 143 to 163, 195 to 215, 231 to 251, 263 to 283, 316 to 336, 347 to 367, 398 to 418, 446 to 466, and 475 to 495; these read IEPK…WLTV, WGWA…WLVF, IFMM…SIEI, GPLP…FFFV, FYLV…TPLV, LDAI…ACGL, SYLS…SFIM, WTVF…IFLA, LCFG…TVLG, WAAL…CFIA, LLVR…LLAL, and AIIA…LSFI.

Belongs to the BCCT transporter (TC 2.A.15) family. CaiT subfamily. As to quaternary structure, homotrimer.

The protein localises to the cell inner membrane. The enzyme catalyses 4-(trimethylamino)butanoate(in) + (R)-carnitine(out) = 4-(trimethylamino)butanoate(out) + (R)-carnitine(in). Its pathway is amine and polyamine metabolism; carnitine metabolism. Functionally, catalyzes the exchange of L-carnitine for gamma-butyrobetaine. The sequence is that of L-carnitine/gamma-butyrobetaine antiporter from Escherichia coli O81 (strain ED1a).